The chain runs to 99 residues: PE family protein PE13 (99 aa).

Residues 1 to 93 enclose the PE domain; that stretch reads MSFVMAYPEM…ASSYAATEVA (93 aa).

The protein belongs to the mycobacterial PE family.

The protein localises to the secreted. The protein resides in the cell wall. In terms of biological role, may play a pivotal role in the interaction between M.tuberculosis and host. Can enhance the survival within macrophages under stress conditions such as H(2)O(2), SDS and low pH. Increases the production of IL-6 and IL-1beta from macrophages, and decreases the secretion of suppressor of cytokine signaling 3 (SOCS-3). These changes probably involve the p38-ERK-NF-kappa-B signaling pathway. Also precipitates the macrophage death. This chain is PE family protein PE13, found in Mycobacterium tuberculosis (strain ATCC 25618 / H37Rv).